Consider the following 449-residue polypeptide: Phosphoglucosamine mutase (449 aa).

Ser103 functions as the Phosphoserine intermediate in the catalytic mechanism. Mg(2+) contacts are provided by Ser103, Asp240, Asp242, and Asp244. Position 103 is a phosphoserine (Ser103).

Belongs to the phosphohexose mutase family. Mg(2+) is required as a cofactor. Post-translationally, activated by phosphorylation.

The enzyme catalyses alpha-D-glucosamine 1-phosphate = D-glucosamine 6-phosphate. In terms of biological role, catalyzes the conversion of glucosamine-6-phosphate to glucosamine-1-phosphate. This Thermobifida fusca (strain YX) protein is Phosphoglucosamine mutase.